The chain runs to 117 residues: Immunoglobulin kappa variable 1-12 (117 aa).

Positions 1–22 (MDMRVPAQLLGLLLLWFPGSRC) are cleaved as a signal peptide. Residues 23 to 45 (DIQMTQSPSSVSASVGDRVTITC) are framework-1. Residues 24–117 (IQMTQSPSSV…YYCQQANSFP (94 aa)) form the Ig-like domain. A disulfide bridge connects residues C45 and C110. The segment at 46-56 (RASQGISSWLA) is complementarity-determining-1. Residues 57 to 71 (WYQQKPGKAPKLLIY) are framework-2. The tract at residues 72 to 78 (AASSLQS) is complementarity-determining-2. The framework-3 stretch occupies residues 79 to 110 (GVPSRFSGSGSGTDFTLTISSLQPEDFATYYC). A complementarity-determining-3 region spans residues 111–117 (QQANSFP).

Immunoglobulins are composed of two identical heavy chains and two identical light chains; disulfide-linked.

The protein localises to the secreted. Its subcellular location is the cell membrane. In terms of biological role, v region of the variable domain of immunoglobulin light chains that participates in the antigen recognition. Immunoglobulins, also known as antibodies, are membrane-bound or secreted glycoproteins produced by B lymphocytes. In the recognition phase of humoral immunity, the membrane-bound immunoglobulins serve as receptors which, upon binding of a specific antigen, trigger the clonal expansion and differentiation of B lymphocytes into immunoglobulins-secreting plasma cells. Secreted immunoglobulins mediate the effector phase of humoral immunity, which results in the elimination of bound antigens. The antigen binding site is formed by the variable domain of one heavy chain, together with that of its associated light chain. Thus, each immunoglobulin has two antigen binding sites with remarkable affinity for a particular antigen. The variable domains are assembled by a process called V-(D)-J rearrangement and can then be subjected to somatic hypermutations which, after exposure to antigen and selection, allow affinity maturation for a particular antigen. The chain is Immunoglobulin kappa variable 1-12 from Homo sapiens (Human).